A 376-amino-acid chain; its full sequence is Germination-specific cysteine protease 1 (376 aa).

Positions 1-22 (MAPSTKVLSLLLLYVVVSLASG) are cleaved as a signal peptide. The propeptide at 23 to 144 (DESIINDHLQ…KYSAAVNGKE (122 aa)) is activation peptide. N-linked (GlcNAc...) asparagine glycosylation is present at Asn93. 3 cysteine pairs are disulfide-bonded: Cys166–Cys208, Cys200–Cys241, and Cys299–Cys351. Cys169 is an active-site residue. Catalysis depends on residues His305 and Asn325.

Belongs to the peptidase C1 family.

Functionally, probable thiol protease. The polypeptide is Germination-specific cysteine protease 1 (Arabidopsis thaliana (Mouse-ear cress)).